Reading from the N-terminus, the 188-residue chain is MRIGVLAMQGAFREHIQSLEALGVQGVEIRHANQLEGIAGLIIPGGESTTIGKLMVEFNLLEPVRHLAEGGLPVFGTCAGMVLLARDIIGSDQPRLGLMNARVQRNAFGRQVDSFEVDLEIPVLGEEPFHAVFIRAPYIEEIEPPAEALATFKDKIVMVRQGNLLATAFHPELTKDLRVHSYFLKMIG.

Position 46 to 48 (46 to 48 (GES)) interacts with L-glutamine. The active-site Nucleophile is cysteine 78. Residues arginine 105 and 134–135 (IR) each bind L-glutamine. Residues histidine 170 and glutamate 172 each act as charge relay system in the active site.

Belongs to the glutaminase PdxT/SNO family. In terms of assembly, in the presence of PdxS, forms a dodecamer of heterodimers. Only shows activity in the heterodimer.

The catalysed reaction is aldehydo-D-ribose 5-phosphate + D-glyceraldehyde 3-phosphate + L-glutamine = pyridoxal 5'-phosphate + L-glutamate + phosphate + 3 H2O + H(+). It carries out the reaction L-glutamine + H2O = L-glutamate + NH4(+). The protein operates within cofactor biosynthesis; pyridoxal 5'-phosphate biosynthesis. Its function is as follows. Catalyzes the hydrolysis of glutamine to glutamate and ammonia as part of the biosynthesis of pyridoxal 5'-phosphate. The resulting ammonia molecule is channeled to the active site of PdxS. This chain is Pyridoxal 5'-phosphate synthase subunit PdxT, found in Moorella thermoacetica (strain ATCC 39073 / JCM 9320).